Reading from the N-terminus, the 37-residue chain is MKVRPSVKKVCPKCKVIRRKGVLRVICENPRHKQRQG.

This sequence belongs to the bacterial ribosomal protein bL36 family.

In Oleidesulfovibrio alaskensis (strain ATCC BAA-1058 / DSM 17464 / G20) (Desulfovibrio alaskensis), this protein is Large ribosomal subunit protein bL36 (rpmJ).